The primary structure comprises 317 residues: Protoheme IX farnesyltransferase (317 aa).

The next 7 membrane-spanning stretches (helical) occupy residues 33–53, 54–74, 117–137, 154–174, 181–201, 242–262, and 285–305; these read VMSLVVFTAFAGLVLAPGEIN, PILGLIAILCIAVGAGASGAL, VILGLAVNWFSAGLLAFTIFF, IVIGGAAGAFPPMLGWACVTG, VILFLIIFLWTPAHFWALALF, FFTGLASAGYGIFAAVLSAIF, and MFAYSVLYLFAIFSGLLADHF.

Belongs to the UbiA prenyltransferase family. Protoheme IX farnesyltransferase subfamily.

It is found in the cell inner membrane. It carries out the reaction heme b + (2E,6E)-farnesyl diphosphate + H2O = Fe(II)-heme o + diphosphate. It participates in porphyrin-containing compound metabolism; heme O biosynthesis; heme O from protoheme: step 1/1. Its function is as follows. Converts heme B (protoheme IX) to heme O by substitution of the vinyl group on carbon 2 of heme B porphyrin ring with a hydroxyethyl farnesyl side group. The sequence is that of Protoheme IX farnesyltransferase from Agrobacterium fabrum (strain C58 / ATCC 33970) (Agrobacterium tumefaciens (strain C58)).